We begin with the raw amino-acid sequence, 131 residues long: MAGVKALVALSFSGAIGLTFLMLGCALEDYGVYWPLFVLIFHAISPIPHFIAKRATYDSDATSSACRELAYFFTTGIVVSAFGFPVILARVSVIKWGACGLVLAGNAVIFLTIQGFFLVFGRGDDFSWEQW.

4 helical membrane passes run 7–27, 32–52, 69–89, and 100–120; these read LVAL…GCAL, VYWP…HFIA, LAYF…VILA, and GLVL…FLVF.

This sequence belongs to the OB-RGRP/VPS55 family. In terms of assembly, interacts with LEPR. Interacts with RAB13.

The protein localises to the golgi apparatus membrane. It is found in the endosome membrane. In terms of biological role, negatively regulates leptin receptor (LEPR) cell surface expression, and thus decreases response to leptin/LEP. Negatively regulates growth hormone (GH) receptor cell surface expression in liver. May play a role in liver resistance to GH during periods of reduced nutrient availability. This is Leptin receptor gene-related protein (LEPROT) from Bos taurus (Bovine).